The primary structure comprises 407 residues: MLHRPRITPAVANARRAMLNTLPADLHNQLVLIALSGGRDSLAAMVIASWVIPRLNGRVGAVVVDHGLQENSARIADEVRIRAEQFALNPILIKRVSPSRVSAGPEASARIARYAAFYDTLEETKAYAIILAHTLDDQAETVLLGLMRGSGPSSLRGMKAVSYTPEDCRYMNNKACNSVTAVYAHNTQRCSCDSRPYPPPPEPRNENRSYFPHPSCKCVEGSATRFTNADIDSRFGVFIRPFLDITRHETGKICEFYGLDYWNDPHNEDVRFSRVRIRHNVMPVLENEIGPGVKYALSRTAKLAQLDTEYLDHLSNELLDEIASKESDWSIRLPINTLQKTPVPIRLRVIRLAALQYFTVSLSFKHTRQIERLLCSSCDIKHVNLPRLITAQRVGNYIYMHTLRGKL.

ATP is bound at residue 36-41; sequence SGGRDS.

Belongs to the tRNA(Ile)-lysidine synthase family.

The protein localises to the cytoplasm. It catalyses the reaction cytidine(34) in tRNA(Ile2) + L-lysine + ATP = lysidine(34) in tRNA(Ile2) + AMP + diphosphate + H(+). In terms of biological role, ligates lysine onto the cytidine present at position 34 of the AUA codon-specific tRNA(Ile) that contains the anticodon CAU, in an ATP-dependent manner. Cytidine is converted to lysidine, thus changing the amino acid specificity of the tRNA from methionine to isoleucine. This Tropheryma whipplei (strain TW08/27) (Whipple's bacillus) protein is tRNA(Ile)-lysidine synthase.